The sequence spans 2410 residues: Cell wall alpha-1,3-glucan synthase ags1 (2410 aa).

Phosphoserine is present on residues serine 1643, serine 1644, and serine 1651. Threonine 1653 carries the post-translational modification Phosphothreonine. A disordered region spans residues 1685–1706 (SLSLGSRRGPGHTTEDDASDGL). Phosphoserine is present on residues serine 1738 and serine 1812. The tract at residues 1796–1827 (QDDLSDPARSVDSDSVSPPLPPFVAGSNPNAR) is disordered. Residues 1802–1827 (PARSVDSDSVSPPLPPFVAGSNPNAR) are compositionally biased toward low complexity.

This sequence belongs to the glycosyltransferase group 1 family. In terms of assembly, interacts with sad1.

The catalysed reaction is [(1-&gt;3)-alpha-D-glucosyl](n) + UDP-alpha-D-glucose = [(1-&gt;3)-alpha-D-glucosyl](n+1) + UDP + H(+). Its function is as follows. Required for alpha-1,3-glucan and alpha-1,4-glucan production which are required for cell wall synthesis. This is Cell wall alpha-1,3-glucan synthase ags1 (ags1) from Schizosaccharomyces pombe (strain 972 / ATCC 24843) (Fission yeast).